A 210-amino-acid polypeptide reads, in one-letter code: LexA repressor (210 aa).

The segment at residues R31–K51 is a DNA-binding region (H-T-H motif). Residues S126 and K163 each act as for autocatalytic cleavage activity in the active site.

Belongs to the peptidase S24 family. As to quaternary structure, homodimer.

It carries out the reaction Hydrolysis of Ala-|-Gly bond in repressor LexA.. Represses a number of genes involved in the response to DNA damage (SOS response), including recA and lexA. In the presence of single-stranded DNA, RecA interacts with LexA causing an autocatalytic cleavage which disrupts the DNA-binding part of LexA, leading to derepression of the SOS regulon and eventually DNA repair. In Actinobacillus succinogenes (strain ATCC 55618 / DSM 22257 / CCUG 43843 / 130Z), this protein is LexA repressor.